A 202-amino-acid chain; its full sequence is Nucleoside triphosphate pyrophosphatase (202 aa).

Aspartate 79 serves as the catalytic Proton acceptor.

This sequence belongs to the Maf family. Requires a divalent metal cation as cofactor.

It is found in the cytoplasm. The enzyme catalyses a ribonucleoside 5'-triphosphate + H2O = a ribonucleoside 5'-phosphate + diphosphate + H(+). The catalysed reaction is a 2'-deoxyribonucleoside 5'-triphosphate + H2O = a 2'-deoxyribonucleoside 5'-phosphate + diphosphate + H(+). Its function is as follows. Nucleoside triphosphate pyrophosphatase. May have a dual role in cell division arrest and in preventing the incorporation of modified nucleotides into cellular nucleic acids. This chain is Nucleoside triphosphate pyrophosphatase, found in Rhodopseudomonas palustris (strain ATCC BAA-98 / CGA009).